The chain runs to 341 residues: Glyceraldehyde-3-phosphate dehydrogenase, cytosolic (341 aa).

NAD(+) contacts are provided by residues arginine 15–isoleucine 16, aspartate 37, and arginine 84. Residues serine 155–threonine 157, threonine 186, threonine 215–glycine 216, and arginine 238 each bind D-glyceraldehyde 3-phosphate. Cysteine 156 (nucleophile) is an active-site residue. Asparagine 320 contacts NAD(+).

This sequence belongs to the glyceraldehyde-3-phosphate dehydrogenase family. Homotetramer.

The protein localises to the cytoplasm. The enzyme catalyses D-glyceraldehyde 3-phosphate + phosphate + NAD(+) = (2R)-3-phospho-glyceroyl phosphate + NADH + H(+). It participates in carbohydrate degradation; glycolysis; pyruvate from D-glyceraldehyde 3-phosphate: step 1/5. Functionally, key enzyme in glycolysis that catalyzes the first step of the pathway by converting D-glyceraldehyde 3-phosphate (G3P) into 3-phospho-D-glyceroyl phosphate. Essential for the maintenance of cellular ATP levels and carbohydrate metabolism. The sequence is that of Glyceraldehyde-3-phosphate dehydrogenase, cytosolic (GAPC) from Magnolia liliiflora (Mulan magnolia).